Here is a 310-residue protein sequence, read N- to C-terminus: MKTLIRKFSRTAITVVLVILAFIAIFNAWVYYTESPWTRDARFSADVVAIAPDVSGLITQVNVHDNQLVKKGQVLFTIDQPRYQKALEEAQADVAYYQVLAQEKRQEAGRRNRLGVQAMSREEIDQANNVLQTVLHQLAKAQATRDLAKLDLERTVIRAPVDGWVTNLNVYTGEFITRGSTAVALVKQNSFYVLAYMEETKLEGVRPGYRAEITPLGSNKVLKGTVDSVAAGVTNASSTRDDKGMATIDSNLEWVRLAQRVPVRIRLDNQQENIWPAGTTATVVVTGKQDRDESQDSFFRKMAHRLREFG.

A helical transmembrane segment spans residues alanine 12–tyrosine 32.

This sequence belongs to the membrane fusion protein (MFP) (TC 8.A.1) family.

The protein resides in the cell inner membrane. Its function is as follows. Forms an efflux pump with AaeB. The sequence is that of p-hydroxybenzoic acid efflux pump subunit AaeA from Escherichia coli O9:H4 (strain HS).